Consider the following 417-residue polypeptide: Probable secreted beta-glucosidase PSU1 (417 aa).

An N-terminal signal peptide occupies residues 1–18 (MRFFETLALALLTTGALA).

It belongs to the SUN family.

It is found in the secreted. Its subcellular location is the cell wall. Its function is as follows. Involved in cell wall synthesis. May be required for the activation of 1,3-beta-glucan synthase. This chain is Probable secreted beta-glucosidase PSU1 (psu1), found in Schizosaccharomyces pombe (strain 972 / ATCC 24843) (Fission yeast).